A 384-amino-acid chain; its full sequence is N-acetyldiaminopimelate deacetylase (384 aa).

The active site involves Asp73. The active-site Proton acceptor is Glu132.

Belongs to the peptidase M20A family. N-acetyldiaminopimelate deacetylase subfamily.

The enzyme catalyses N-acetyl-(2S,6S)-2,6-diaminopimelate + H2O = (2S,6S)-2,6-diaminopimelate + acetate. Its pathway is amino-acid biosynthesis; L-lysine biosynthesis via DAP pathway; LL-2,6-diaminopimelate from (S)-tetrahydrodipicolinate (acetylase route): step 3/3. In terms of biological role, catalyzes the conversion of N-acetyl-diaminopimelate to diaminopimelate and acetate. This Limosilactobacillus fermentum (strain NBRC 3956 / LMG 18251) (Lactobacillus fermentum) protein is N-acetyldiaminopimelate deacetylase.